The primary structure comprises 513 residues: ATP synthase subunit alpha (513 aa).

169–176 (GDRQCGKT) contacts ATP.

It belongs to the ATPase alpha/beta chains family. F-type ATPases have 2 components, CF(1) - the catalytic core - and CF(0) - the membrane proton channel. CF(1) has five subunits: alpha(3), beta(3), gamma(1), delta(1), epsilon(1). CF(0) has three main subunits: a(1), b(2) and c(9-12). The alpha and beta chains form an alternating ring which encloses part of the gamma chain. CF(1) is attached to CF(0) by a central stalk formed by the gamma and epsilon chains, while a peripheral stalk is formed by the delta and b chains.

Its subcellular location is the cell inner membrane. It catalyses the reaction ATP + H2O + 4 H(+)(in) = ADP + phosphate + 5 H(+)(out). Its function is as follows. Produces ATP from ADP in the presence of a proton gradient across the membrane. The alpha chain is a regulatory subunit. The protein is ATP synthase subunit alpha of Burkholderia cenocepacia (strain ATCC BAA-245 / DSM 16553 / LMG 16656 / NCTC 13227 / J2315 / CF5610) (Burkholderia cepacia (strain J2315)).